Consider the following 427-residue polypeptide: Imidazolonepropionase (427 aa).

Fe(3+)-binding residues include histidine 81 and histidine 83. Residues histidine 81 and histidine 83 each contribute to the Zn(2+) site. Residues arginine 90, tyrosine 153, and histidine 186 each coordinate 4-imidazolone-5-propanoate. Tyrosine 153 serves as a coordination point for N-formimidoyl-L-glutamate. Histidine 260 contacts Fe(3+). Histidine 260 contributes to the Zn(2+) binding site. Glutamate 263 is a binding site for 4-imidazolone-5-propanoate. Residue aspartate 335 coordinates Fe(3+). A Zn(2+)-binding site is contributed by aspartate 335. Residues asparagine 337 and glycine 339 each coordinate N-formimidoyl-L-glutamate. Serine 340 contacts 4-imidazolone-5-propanoate.

This sequence belongs to the metallo-dependent hydrolases superfamily. HutI family. Zn(2+) is required as a cofactor. It depends on Fe(3+) as a cofactor.

The protein resides in the cytoplasm. The enzyme catalyses 4-imidazolone-5-propanoate + H2O = N-formimidoyl-L-glutamate. It participates in amino-acid degradation; L-histidine degradation into L-glutamate; N-formimidoyl-L-glutamate from L-histidine: step 3/3. In terms of biological role, catalyzes the hydrolytic cleavage of the carbon-nitrogen bond in imidazolone-5-propanoate to yield N-formimidoyl-L-glutamate. It is the third step in the universal histidine degradation pathway. In Chloroflexus aggregans (strain MD-66 / DSM 9485), this protein is Imidazolonepropionase.